Reading from the N-terminus, the 579-residue chain is Membrane frizzled-related protein (579 aa).

At 1–69 (MKDFSDVILC…RPDCRFSWLC (69 aa)) the chain is on the cytoplasmic side. Residues 70 to 90 (VLLLSSLLLLLLGLLVAIILA) form a helical; Signal-anchor for type II membrane protein membrane-spanning segment. At 91–579 (QLQAAPPSGA…AADLEACAQP (489 aa)) the chain is on the extracellular side. The tract at residues 100-143 (ASHSPLPAGGLTTTTTTPTITTSQAAGTPKGQQESGVSPSPQST) is disordered. Residues 111–121 (TTTTTTPTITT) show a composition bias toward low complexity. Over residues 122–143 (SQAAGTPKGQQESGVSPSPQST) the composition is skewed to polar residues. 2 disulfide bridges follow: Cys-144/Cys-170 and Cys-197/Cys-216. A CUB 1 domain is found at 144 to 253 (CGGLLSGPRG…FGFHAWYQAM (110 aa)). N-linked (GlcNAc...) asparagine glycosylation is present at Asn-227. The LDL-receptor class A 1 domain maps to 259 to 295 (SCAHDEFRCDQLICLLPDSVCDGFANCADGSDETNCS). 5 disulfides stabilise this stretch: Cys-260–Cys-272, Cys-267–Cys-285, Cys-279–Cys-294, Cys-301–Cys-327, and Cys-354–Cys-377. Residues 301–414 (CGGNLTGLQG…GGFSATYLAF (114 aa)) enclose the CUB 2 domain. N-linked (GlcNAc...) asparagine glycosylation occurs at Asn-415. Residues 420 to 455 (PCGPSELSCQAGGCKGVQWMCDMWRDCTDGSDDNCS) enclose the LDL-receptor class A 2 domain. 8 disulfides stabilise this stretch: Cys-421/Cys-433, Cys-428/Cys-446, Cys-440/Cys-454, Cys-466/Cys-528, Cys-474/Cys-521, Cys-512/Cys-549, Cys-538/Cys-576, and Cys-542/Cys-564. Positions 461 to 579 (PPELACEPVQ…AADLEACAQP (119 aa)) constitute an FZ domain.

Interacts with C1QTNF5. In terms of tissue distribution, specifically expressed in brain. Strongly expressed in medulla oblongata and to a lower extent in hippocampus and corpus callosum. Expressed in keratinocytes.

The protein resides in the apical cell membrane. May play a role in eye development. The chain is Membrane frizzled-related protein (MFRP) from Homo sapiens (Human).